Consider the following 463-residue polypeptide: Cis-zeatin O-glucosyltransferase 2 (463 aa).

Catalysis depends on H21, which acts as the Proton acceptor. Residues H21 and N91 each coordinate an anthocyanidin. D127 (charge relay) is an active-site residue. UDP-alpha-D-glucose is bound by residues A339, Q341, H356, W359, N360, S361, E364, D380, and Q381.

This sequence belongs to the UDP-glycosyltransferase family. In terms of tissue distribution, highly expressed in root. Expressed at much lower level in kernel. Weakly or not expressed in expressed in stems and leaves.

The enzyme catalyses cis-zeatin + UDP-alpha-D-glucose = O-beta-D-glucosyl-cis-zeatin + UDP + H(+). In terms of biological role, utilizes UDP-glucose as the sugar donor and catalyzes the formation of O-beta-D-glucosyl-cis-zeatin from cis-zeatin. May regulate active versus storage forms of cytokinins and could have an impact on seed growth. In Zea mays (Maize), this protein is Cis-zeatin O-glucosyltransferase 2.